Reading from the N-terminus, the 324-residue chain is MSSLSQGDSPSLTATASSSSSSSTSGSRTPKANNSFNQSAASYFSYPVTHVVSGLYRRLTEPNITKASRKDSNSPNRKMNARNNRDSSTTSPDIFVPIRTASPFQPPPLTPLTLTPGPGVPQQQLLTRALAEEIRLLVPARLQLVDTWRLAYSLDRDGASLSTLYEHCRDFSHRSPRAGYVLIVRDSSPAGAVFGAYMTDPPHPDSHYFGTGECFLWRASVLPSPSNLLNINGPQSEEMLERAGLPLPPSADTTHAGRSTTLRGDSRGHGDGRLAAPRANGGTGAGAASGASTPERIRFKAFPYSGVNDYMMFCETGFLSLGGG.

Disordered stretches follow at residues 1-35 (MSSL…ANNS), 63-113 (NITK…TPLT), and 244-292 (GLPL…SGAS). The span at 9–29 (SPSLTATASSSSSSSTSGSRT) shows a compositional bias: low complexity. The 201-residue stretch at 124–324 (QLLTRALAEE…ETGFLSLGGG (201 aa)) folds into the TLDc domain. Residues 251–263 (ADTTHAGRSTTLR) are compositionally biased toward polar residues.

Belongs to the OXR1 family.

Its subcellular location is the mitochondrion. Functionally, may be involved in protection from oxidative damage. The chain is Oxidation resistance protein 1 (oxr1) from Aspergillus fumigatus (strain ATCC MYA-4609 / CBS 101355 / FGSC A1100 / Af293) (Neosartorya fumigata).